A 384-amino-acid chain; its full sequence is Lipid-A-disaccharide synthase (384 aa).

The protein belongs to the LpxB family.

The enzyme catalyses a lipid X + a UDP-2-N,3-O-bis[(3R)-3-hydroxyacyl]-alpha-D-glucosamine = a lipid A disaccharide + UDP + H(+). It functions in the pathway bacterial outer membrane biogenesis; LPS lipid A biosynthesis. In terms of biological role, condensation of UDP-2,3-diacylglucosamine and 2,3-diacylglucosamine-1-phosphate to form lipid A disaccharide, a precursor of lipid A, a phosphorylated glycolipid that anchors the lipopolysaccharide to the outer membrane of the cell. The polypeptide is Lipid-A-disaccharide synthase (Geobacter sulfurreducens (strain ATCC 51573 / DSM 12127 / PCA)).